A 147-amino-acid chain; its full sequence is UPF0208 membrane protein SO_2914 (147 aa).

Transmembrane regions (helical) follow at residues 40–60 and 68–88; these read LAILVMPVLAVLASVSQLYTY and ALTIALFFISLPLQGLLWLGW.

It belongs to the UPF0208 family.

The protein localises to the cell inner membrane. In Shewanella oneidensis (strain ATCC 700550 / JCM 31522 / CIP 106686 / LMG 19005 / NCIMB 14063 / MR-1), this protein is UPF0208 membrane protein SO_2914.